Consider the following 77-residue polypeptide: DNA-directed RNA polymerase subunit Rpo5 (77 aa).

Belongs to the archaeal Rpo5/eukaryotic RPB5 RNA polymerase subunit family. In terms of assembly, part of the RNA polymerase complex.

The protein localises to the cytoplasm. It carries out the reaction RNA(n) + a ribonucleoside 5'-triphosphate = RNA(n+1) + diphosphate. Its function is as follows. DNA-dependent RNA polymerase (RNAP) catalyzes the transcription of DNA into RNA using the four ribonucleoside triphosphates as substrates. The sequence is that of DNA-directed RNA polymerase subunit Rpo5 from Methanosphaera stadtmanae (strain ATCC 43021 / DSM 3091 / JCM 11832 / MCB-3).